The chain runs to 626 residues: Phosphomethylpyrimidine synthase (626 aa).

Positions 1 to 22 are disordered; it reads MTKQEKAINLSESAQVDQQSVQ. Polar residues predominate over residues 10-22; the sequence is LSESAQVDQQSVQ. Substrate is bound by residues asparagine 232, methionine 261, tyrosine 290, histidine 326, 346-348, 387-390, and glutamate 426; these read SRG and DGLR. Histidine 430 serves as a coordination point for Zn(2+). Substrate is bound at residue tyrosine 453. Histidine 494 contacts Zn(2+). [4Fe-4S] cluster-binding residues include cysteine 574, cysteine 577, and cysteine 582.

It belongs to the ThiC family. Homodimer. [4Fe-4S] cluster serves as cofactor.

It catalyses the reaction 5-amino-1-(5-phospho-beta-D-ribosyl)imidazole + S-adenosyl-L-methionine = 4-amino-2-methyl-5-(phosphooxymethyl)pyrimidine + CO + 5'-deoxyadenosine + formate + L-methionine + 3 H(+). The protein operates within cofactor biosynthesis; thiamine diphosphate biosynthesis. In terms of biological role, catalyzes the synthesis of the hydroxymethylpyrimidine phosphate (HMP-P) moiety of thiamine from aminoimidazole ribotide (AIR) in a radical S-adenosyl-L-methionine (SAM)-dependent reaction. This chain is Phosphomethylpyrimidine synthase, found in Pseudomonas putida (strain ATCC 700007 / DSM 6899 / JCM 31910 / BCRC 17059 / LMG 24140 / F1).